A 75-amino-acid polypeptide reads, in one-letter code: MNSWQKIRMAKQQQVRVARQHRAAKLGRLYKAKKLRAELCEKLQLQRVNNDAALAKAFEEEFVYPHFSFYLYTLN.

This Orgyia pseudotsugata (Douglas-fir tussock moth) protein is 8.9 kDa basic protein (P8.9).